A 409-amino-acid chain; its full sequence is Elongation factor Tu, chloroplastic (409 aa).

Positions 10 to 214 constitute a tr-type G domain; it reads KPHVNIGTIG…NVDSYIPTPA (205 aa). The segment at 19-26 is G1; it reads GHVDHGKT. GTP is bound at residue 19-26; the sequence is GHVDHGKT. Thr-26 serves as a coordination point for Mg(2+). Positions 60–64 are G2; that stretch reads GITIN. A G3 region spans residues 81-84; sequence DCPG. GTP-binding positions include 81–85 and 136–139; these read DCPGH and NKED. Residues 136-139 form a G4 region; sequence NKED. Positions 174–176 are G5; that stretch reads SAL.

It belongs to the TRAFAC class translation factor GTPase superfamily. Classic translation factor GTPase family. EF-Tu/EF-1A subfamily.

It localises to the plastid. It is found in the chloroplast. It carries out the reaction GTP + H2O = GDP + phosphate + H(+). GTP hydrolase that promotes the GTP-dependent binding of aminoacyl-tRNA to the A-site of ribosomes during protein biosynthesis. This Ostreococcus tauri protein is Elongation factor Tu, chloroplastic (tufA).